A 416-amino-acid polypeptide reads, in one-letter code: Serine hydroxymethyltransferase (416 aa).

(6S)-5,6,7,8-tetrahydrofolate is bound by residues Leu121 and 125–127 (GHL). The residue at position 229 (Lys229) is an N6-(pyridoxal phosphate)lysine.

This sequence belongs to the SHMT family. As to quaternary structure, homodimer. It depends on pyridoxal 5'-phosphate as a cofactor.

The protein localises to the cytoplasm. The enzyme catalyses (6R)-5,10-methylene-5,6,7,8-tetrahydrofolate + glycine + H2O = (6S)-5,6,7,8-tetrahydrofolate + L-serine. The protein operates within one-carbon metabolism; tetrahydrofolate interconversion. It functions in the pathway amino-acid biosynthesis; glycine biosynthesis; glycine from L-serine: step 1/1. Its function is as follows. Catalyzes the reversible interconversion of serine and glycine with tetrahydrofolate (THF) serving as the one-carbon carrier. This reaction serves as the major source of one-carbon groups required for the biosynthesis of purines, thymidylate, methionine, and other important biomolecules. Also exhibits THF-independent aldolase activity toward beta-hydroxyamino acids, producing glycine and aldehydes, via a retro-aldol mechanism. The protein is Serine hydroxymethyltransferase of Neisseria gonorrhoeae (strain NCCP11945).